Reading from the N-terminus, the 67-residue chain is Beta-mammal toxin CeII9 (67 aa).

The LCN-type CS-alpha/beta domain maps to 1-66; it reads KEGYLVNHST…VWPLPKKTCN (66 aa). 4 disulfide bridges follow: Cys12/Cys65, Cys16/Cys41, Cys25/Cys46, and Cys29/Cys48.

Belongs to the long (4 C-C) scorpion toxin superfamily. Sodium channel inhibitor family. Beta subfamily. As to expression, expressed by the venom gland.

The protein resides in the secreted. Its function is as follows. Beta toxins bind at site-4 of sodium channels and shift the voltage of activation toward more negative potentials thereby affecting sodium channel activation and promoting spontaneous and repetitive firing. This toxin is active against mammals and lethal to mice. Selectively modulates Nav1.4/SCN4A, a sodium channel present in both denervated and innervated skeletal muscle. In Centruroides elegans (Bark scorpion), this protein is Beta-mammal toxin CeII9.